The chain runs to 30 residues: Varv peptide H (30 aa).

Residues 1-30 (GLPVCGETCFGGTCNTPGCSCETWPVCSRN) constitute a cross-link (cyclopeptide (Gly-Asn)). 3 cysteine pairs are disulfide-bonded: Cys5–Cys19, Cys9–Cys21, and Cys14–Cys27.

Post-translationally, this is a cyclic peptide.

Functionally, probably participates in a plant defense mechanism. The chain is Varv peptide H from Viola arvensis (European field pansy).